Reading from the N-terminus, the 897-residue chain is Transportin-2 (897 aa).

HEAT repeat units lie at residues 9-36 (GLQQVLQLLKDSQSPNTATQRIVQDKLK), 41-79 (FPDFNNYLIFVLTRLKSEDEPTRSLSGLILKNNVKAHYQ), 88-121 (FIKQECLNNIGDASSLIRATIGILITTIASKGEL), 127-164 (LLPQLCNLLNSEDYNTCEGAFGALQKICEDSSELLDSD), 171-201 (NIMIPKFLQFFKHCSPKIRSHAIACVNQFIM), 214-241 (FIEHLFALAVDDDPEVRKNVCRALVMLL), 253-280 (HSIIQYMLQRTQDHDENVALEACEFWLT), 296-386 (VQLI…LANV), 394-422 (HLLPLLKGLLFHPEWVVKESGILVLGAIA), 434-461 (PELIPHLIQCLSDKKALVRSIACWTLSR), 475-508 (LKPLMTELLKRILDGNKRVQEAACSAFATLEEEA), 516-549 (LSYILDTLVFAFGKYQHKNLLILYDAIGTLADSV), 557-595 (EYIQKLMPPLIQKWNELKDEDKDLFPLLECLSSVATALQ), 603-654 (EPVY…GLGG), 665-696 (IMTLLFQCMQDSMPEVRQSSFALLGDLTKACF), 704-737 (AEFMPILGTNLNPEFISVCNNATWAIGEICMQMG), 745-790 (QMVL…YVCP), 798-831 (QQFIRPWCTSLRNIRDNEEKDSAFRGICMMIGVN), 840-871 (IFFCDAVASWVSPKDDLRDMFYKILHGFKDQV), and 874-894 (DNWQQFSEQFPPLLKERLAAF). In terms of domain architecture, Importin N-terminal spans 31–99 (VQDKLKQLNQ…KQECLNNIGD (69 aa)). Residues 325-364 (AVPDSEQDIKPRFHKSRTVTLPHEAERPDGSEDAEDDDDD) form a disordered region. A compositionally biased stretch (acidic residues) spans 355-364 (SEDAEDDDDD). Lys862 carries the N6-acetyllysine modification.

This sequence belongs to the importin beta family. Importin beta-2 subfamily.

It is found in the cytoplasm. The protein localises to the nucleus. In terms of biological role, probably functions in nuclear protein import as nuclear transport receptor. Serves as receptor for nuclear localization signals (NLS) in cargo substrates. Is thought to mediate docking of the importin/substrate complex to the nuclear pore complex (NPC) through binding to nucleoporin and the complex is subsequently translocated through the pore by an energy requiring, Ran-dependent mechanism. At the nucleoplasmic side of the NPC, Ran binds to the importin, the importin/substrate complex dissociates and importin is re-exported from the nucleus to the cytoplasm where GTP hydrolysis releases Ran. The directionality of nuclear import is thought to be conferred by an asymmetric distribution of the GTP- and GDP-bound forms of Ran between the cytoplasm and nucleus. In Homo sapiens (Human), this protein is Transportin-2 (TNPO2).